Here is a 337-residue protein sequence, read N- to C-terminus: Hairy/enhancer-of-split related with YRPW motif protein 2 (337 aa).

Residues 1-52 (MKRPCEETTSESDMDETIDVGSENNYSGQSTSSVIRLNSPTTTSQIMARKKR) form a disordered region. Over residues 8-18 (TTSESDMDETI) the composition is skewed to acidic residues. Residues 22 to 46 (SENNYSGQSTSSVIRLNSPTTTSQI) show a composition bias toward polar residues. The transcriptional repression and interaction with NCOR1 and SIN3A stretch occupies residues 47-116 (MARKKRRGII…GGKGYFDAHA (70 aa)). In terms of domain architecture, bHLH spans 48–103 (ARKKRRGIIEKRRRDRINNSLSELRRLVPTAFEKQGSAKLEKAEILQMTVDHLKML). The Orange domain maps to 122 to 157 (MSIGFRECLTEVARYLSSVEGLDSSDPLRVRLVSHL). Residues 307-325 (LSVSATSSPQQTSSGTNNK) are compositionally biased toward polar residues. Residues 307–337 (LSVSATSSPQQTSSGTNNKPYRPWGTEVGAF) are disordered. Positions 327–330 (YRPW) match the YRPW motif motif.

Belongs to the HEY family. May self-associate. Interacts with GATA4, HES1 and HEYL. Interacts with HDAC1, NCOR1 and SIN3A. Interacts with ARNT and GATA6.

The protein localises to the nucleus. Functionally, downstream effector of Notch signaling which may be required for cardiovascular development. Transcriptional repressor which binds preferentially to the canonical E box sequence 5'-CACGTG-3'. Represses transcription by the cardiac transcriptional activators GATA4 and GATA6. The protein is Hairy/enhancer-of-split related with YRPW motif protein 2 (HEY2) of Homo sapiens (Human).